A 29-amino-acid chain; its full sequence is Cytochrome b6-f complex subunit 8 (29 aa).

The chain crosses the membrane as a helical span at residues 3 to 23; the sequence is MVSLAWAALMVVFTFSLSLVV.

This sequence belongs to the PetN family. As to quaternary structure, the 4 large subunits of the cytochrome b6-f complex are cytochrome b6, subunit IV (17 kDa polypeptide, PetD), cytochrome f and the Rieske protein, while the 4 small subunits are PetG, PetL, PetM and PetN. The complex functions as a dimer.

The protein resides in the plastid. Its subcellular location is the chloroplast thylakoid membrane. Component of the cytochrome b6-f complex, which mediates electron transfer between photosystem II (PSII) and photosystem I (PSI), cyclic electron flow around PSI, and state transitions. The chain is Cytochrome b6-f complex subunit 8 from Cucumis sativus (Cucumber).